We begin with the raw amino-acid sequence, 128 residues long: Ribonuclease pancreatic (128 aa).

Residues 1-15 (SESSAKKFERQHMDS) are compositionally biased toward basic and acidic residues. The tract at residues 1–28 (SESSAKKFERQHMDSRGSPSTNPNYCNE) is disordered. Substrate-binding residues include K7 and R10. H12 serves as the catalytic Proton acceptor. Intrachain disulfides connect C26–C84, C40–C95, C58–C110, and C65–C72. N34 carries an N-linked (GlcNAc...) asparagine glycan. Substrate is bound by residues 41-45 (KPVNT), K66, and R85. H119 serves as the catalytic Proton donor.

This sequence belongs to the pancreatic ribonuclease family. Monomer. Interacts with and forms tight 1:1 complexes with RNH1. Dimerization of two such complexes may occur. Interaction with RNH1 inhibits this protein. As to expression, pancreas.

The protein resides in the secreted. It catalyses the reaction an [RNA] containing cytidine + H2O = an [RNA]-3'-cytidine-3'-phosphate + a 5'-hydroxy-ribonucleotide-3'-[RNA].. The catalysed reaction is an [RNA] containing uridine + H2O = an [RNA]-3'-uridine-3'-phosphate + a 5'-hydroxy-ribonucleotide-3'-[RNA].. Endonuclease that catalyzes the cleavage of RNA on the 3' side of pyrimidine nucleotides. Acts on single-stranded and double-stranded RNA. This chain is Ribonuclease pancreatic (RNASE1), found in Myocastor coypus (Coypu).